A 468-amino-acid polypeptide reads, in one-letter code: Meiotically up-regulated gene 111 protein (468 aa).

The next 12 membrane-spanning stretches (helical) occupy residues 13–33 (LVLI…NSVT), 59–79 (IVSA…VPFY), 92–112 (VFTT…SILY), 116–136 (FPTC…ISGT), 158–178 (IVVL…LGSI), 190–210 (LISW…AVFF), 285–305 (PIPI…FFDI), 330–350 (FGSL…GFSV), 356–376 (TMLI…FATA), 382–402 (LALF…LVAA), 417–437 (ALLE…AFIV), and 446–466 (FFIG…LLLG).

It localises to the membrane. In terms of biological role, has a role in meiosis. This Schizosaccharomyces pombe (strain 972 / ATCC 24843) (Fission yeast) protein is Meiotically up-regulated gene 111 protein (mug111).